A 180-amino-acid chain; its full sequence is Large ribosomal subunit protein uL6 (180 aa).

The protein belongs to the universal ribosomal protein uL6 family. As to quaternary structure, part of the 50S ribosomal subunit.

In terms of biological role, this protein binds to the 23S rRNA, and is important in its secondary structure. It is located near the subunit interface in the base of the L7/L12 stalk, and near the tRNA binding site of the peptidyltransferase center. This Clostridium kluyveri (strain NBRC 12016) protein is Large ribosomal subunit protein uL6.